A 390-amino-acid chain; its full sequence is Ribosomal RNA small subunit methyltransferase H (390 aa).

S-adenosyl-L-methionine contacts are provided by residues 47–49 (GGH), Asp66, Phe93, Asp122, and Gln129. The tract at residues 282 to 390 (SKTPPGLPID…SHREDVEGEQ (109 aa)) is disordered. Residues 305–316 (GSEKADEQENNK) show a composition bias toward basic and acidic residues. Positions 348–358 (SGSSTTYSARS) are enriched in polar residues. 2 stretches are compositionally biased toward basic and acidic residues: residues 360 to 372 (SRHE…REHL) and 381 to 390 (SHREDVEGEQ).

Belongs to the methyltransferase superfamily. RsmH family.

It is found in the cytoplasm. It catalyses the reaction cytidine(1402) in 16S rRNA + S-adenosyl-L-methionine = N(4)-methylcytidine(1402) in 16S rRNA + S-adenosyl-L-homocysteine + H(+). Specifically methylates the N4 position of cytidine in position 1402 (C1402) of 16S rRNA. The sequence is that of Ribosomal RNA small subunit methyltransferase H from Corynebacterium kroppenstedtii (strain DSM 44385 / JCM 11950 / CIP 105744 / CCUG 35717).